We begin with the raw amino-acid sequence, 377 residues long: Glutamate 5-kinase (377 aa).

An ATP-binding site is contributed by Lys-21. Substrate-binding residues include Ser-61, Asp-149, and Asn-161. Residues 181–182 (SD) and 223–229 (SGGMTSK) each bind ATP. The PUA domain maps to 286-363 (RGSVQVDAGA…REHEELLGYA (78 aa)).

Belongs to the glutamate 5-kinase family.

It localises to the cytoplasm. It catalyses the reaction L-glutamate + ATP = L-glutamyl 5-phosphate + ADP. It participates in amino-acid biosynthesis; L-proline biosynthesis; L-glutamate 5-semialdehyde from L-glutamate: step 1/2. In terms of biological role, catalyzes the transfer of a phosphate group to glutamate to form L-glutamate 5-phosphate. The polypeptide is Glutamate 5-kinase (Novosphingobium aromaticivorans (strain ATCC 700278 / DSM 12444 / CCUG 56034 / CIP 105152 / NBRC 16084 / F199)).